The following is a 386-amino-acid chain: Homeobox protein Hox-A13 (386 aa).

The segment at residues 320 to 379 is a DNA-binding region (homeobox); sequence GRKKRVPYTKVQLKELEREYATNKFITKDKRRRISATTNLSERQVTIWFQNRRVKEKKVI.

This sequence belongs to the Abd-B homeobox family. As to quaternary structure, binds DNA as a homodimer. Interacts with MEIS1, MEIS2 and MEIS3.

The protein localises to the nucleus. Sequence-specific, AT-rich binding transcription factor which is part of a developmental regulatory system that provides cells with specific positional identities on the anterior-posterior axis. This is Homeobox protein Hox-A13 (Hoxa13) from Mus musculus (Mouse).